Reading from the N-terminus, the 412-residue chain is TAASSAFFPVPSADTSSRPGKLGNGPSSFSPLKPKSIPNGGLQVKASASAPPKINGSSVGLKSGGLKTHDDAPSAPPPRTFINQLPDWSMLLAAITTAFLAAEKQWMMLDRKPKRLDMLEDPFGLGRVVQDGLVFRQNFSIRSYEIGADRTASIETVMNHLQETALNHVKTAGLSNDGFGRTPEMYKRDLIWVVAKMQVMVNRYPTWGDTVEVNTWVAKSGKNGMRRDWLISDCNTGEILTRASSVWVMMNQKTRKLSKIPDEVRREIEPHFVDSAPVIEDDDRKLPKLDEKSADSIRKGLTPRWNDLDVNQHVNNAKYIGWILESTPPEVLETQELCSLTLEYRRECGRESVLESLTAVDPSGEGYGSQFQHLLRLEDGGEIVKGRTEWRPKNAGINGVVPSEESSPGDYS.

Low complexity-rich tracts occupy residues T1–A13 and G56–L66. The N-terminal 46 residues, T1–A46, are a transit peptide targeting the chloroplast. The interval T1–P78 is disordered. Active-site residues include N311, H313, and C348.

Belongs to the acyl-ACP thioesterase family.

The protein resides in the plastid. Its subcellular location is the chloroplast. It carries out the reaction tetradecanoyl-[ACP] + H2O = tetradecanoate + holo-[ACP] + H(+). The catalysed reaction is hexadecanoyl-[ACP] + H2O = hexadecanoate + holo-[ACP] + H(+). In terms of biological role, plays an essential role in chain termination during de novo fatty acid synthesis. Possesses thioesterase activity for medium chain acyl-ACPs. Substrate preference is 14:0 &gt; 16:0 &gt; 16:1. This chain is Acyl-[acyl-carrier-protein] hydrolase FATB2, chloroplastic, found in Cuphea viscosissima (Blue waxweed).